Consider the following 254-residue polypeptide: 3-dehydroquinate dehydratase (254 aa).

3-dehydroquinate-binding positions include 47 to 49 (EWR) and arginine 83. Histidine 144 serves as the catalytic Proton donor/acceptor. Lysine 171 acts as the Schiff-base intermediate with substrate in catalysis. Residues arginine 214, serine 233, and glutamine 237 each contribute to the 3-dehydroquinate site.

The protein belongs to the type-I 3-dehydroquinase family. As to quaternary structure, homodimer.

It catalyses the reaction 3-dehydroquinate = 3-dehydroshikimate + H2O. The protein operates within metabolic intermediate biosynthesis; chorismate biosynthesis; chorismate from D-erythrose 4-phosphate and phosphoenolpyruvate: step 3/7. Functionally, involved in the third step of the chorismate pathway, which leads to the biosynthesis of aromatic amino acids. Catalyzes the cis-dehydration of 3-dehydroquinate (DHQ) and introduces the first double bond of the aromatic ring to yield 3-dehydroshikimate. The protein is 3-dehydroquinate dehydratase of Bacillus licheniformis (strain ATCC 14580 / DSM 13 / JCM 2505 / CCUG 7422 / NBRC 12200 / NCIMB 9375 / NCTC 10341 / NRRL NRS-1264 / Gibson 46).